Consider the following 160-residue polypeptide: Endoribonuclease YbeY (160 aa).

Positions 127, 131, and 137 each coordinate Zn(2+).

It belongs to the endoribonuclease YbeY family. Zn(2+) serves as cofactor.

The protein resides in the cytoplasm. In terms of biological role, single strand-specific metallo-endoribonuclease involved in late-stage 70S ribosome quality control and in maturation of the 3' terminus of the 16S rRNA. This Synechococcus sp. (strain RCC307) protein is Endoribonuclease YbeY.